We begin with the raw amino-acid sequence, 630 residues long: A-type voltage-gated potassium channel KCND2 (630 aa).

At M1–A184 the chain is on the cytoplasmic side. The tract at residues A2–M20 is interaction with KCNIP1, KCNIP2, and other family members. Phosphothreonine is present on T38. Residues E71–D90 form an interaction with KCNIP1 region. Residues H105, C111, C132, and C133 each coordinate Zn(2+). The chain crosses the membrane as a helical span at residues L185 to T206. Residues V207–A226 are Extracellular-facing. The helical transmembrane segment at V227–A249 threads the bilayer. Over A250–R256 the chain is Cytoplasmic. The chain crosses the membrane as a helical span at residues F257–D281. Over N282 to G287 the chain is Extracellular. Residues A288–S307 traverse the membrane as a helical; Voltage-sensor segment. Topologically, residues Q308–A321 are cytoplasmic. The tract at residues Q308 to A321 is S4-S5 linker. Residues S322–A345 form a helical membrane-spanning segment. At E346–I357 the chain is on the extracellular side. The helical intramembrane region spans P358–T369. T370, L371, G372, and Y373 together coordinate K(+). A Selectivity filter motif is present at residues T370–D375. The stretch at T370 to V377 is an intramembrane region. Residues P378–T380 lie on the Extracellular side of the membrane. A helical transmembrane segment spans residues I381 to P403. The Cytoplasmic portion of the chain corresponds to V404–L630. Residues F474–T489 form a required for dendritic targeting region. The interval F474–L630 is important for normal channel activation and inactivation, for interaction with KCNIP2, and probably other family members as well. Phosphoserine is present on residues S548, S552, S572, and S575. The tract at residues I600–G622 is disordered. Residues T602 and T607 each carry the phosphothreonine modification. S616 is subject to Phosphoserine. The PDZ-binding motif lies at V627–L630.

It belongs to the potassium channel family. D (Shal) (TC 1.A.1.2) subfamily. Kv4.2/KCND2 sub-subfamily. In terms of assembly, homotetramer or heterotetramer with KCND1 or KCND3. Associates with the regulatory subunits KCNIP2, KCNIP3 and KCNIP4. Interacts with the regulatory subunit KCNIP1; this interaction mediates the capture of both the N- and C-terminus of KCND2, preventing N-type inactivation and stabilizing the S6 conformation, thereby accelerating closed state inactivation and recovery. In vivo, probably exists as heteromeric complex containing variable proportions of KCND1, KCND2, KCND3, KCNIP1, KCNIP2, KCNIP3, KCNIP4, DPP6 and DPP10. The tetrameric channel can associate with up to four regulatory subunits, such as KCNIP2 or KCNIP4. Interaction with four KCNIP4 chains does not reduce interaction with DPP10. Interacts with DLG4 and NCS1/FREQ. Interacts with DLG1. Probably part of a complex consisting of KCNIP1, KCNIP2 isoform 3 and KCND2. Interacts with FLNA, FLNC and DPP10. Identified in a complex with cAMP-dependent protein kinase (PKA), CAV3, AKAP6 and KCND3 in cardiac myocytes. Interacts (via S1 and S2 helices) with DPP6; this interaction stabilizes the conformation of the S1-S2 helices and facilitates S4 conformational change, including S4 sliding up and down, thereby accelerating activation, inactivation, and recovery. Phosphorylation in response to MAPK activation is increased in stimulated dendrites. Interaction with KCNIP2 and DPP6 propomtes phosphorylation by PKA at Ser-552. Phosphorylation at Ser-552 has no effect on interaction with KCNIP3, but is required for the regulation of channel activity by KCNIP3. Phosphorylation at Ser-552 leads to KCND2 internalization. Phosphorylated by MAPK in response to signaling via the metabotropic glutamate receptor GRM5. Phosphorylation at Ser-616 is required for the down-regulation of neuronal A-type currents in response to signaling via GRM5.

The protein localises to the cell membrane. It localises to the cell projection. The protein resides in the dendrite. Its subcellular location is the synapse. It is found in the perikaryon. The protein localises to the postsynaptic cell membrane. It localises to the dendritic spine. The protein resides in the sarcolemma. Its subcellular location is the cell junction. It is found in the membrane. The protein localises to the caveola. The catalysed reaction is K(+)(in) = K(+)(out). Voltage-gated potassium channel that mediates transmembrane potassium transport in excitable membranes, primarily in the brain, but also in rodent heart. Mediates the major part of the dendritic A-type current I(SA) in brain neurons. This current is activated at membrane potentials that are below the threshold for action potentials. It regulates neuronal excitability, prolongs the latency before the first spike in a series of action potentials, regulates the frequency of repetitive action potential firing, shortens the duration of action potentials and regulates the back-propagation of action potentials from the neuronal cell body to the dendrites. Contributes to the regulation of the circadian rhythm of action potential firing in suprachiasmatic nucleus neurons, which regulates the circadian rhythm of locomotor activity. Functions downstream of the metabotropic glutamate receptor GRM5 and plays a role in neuronal excitability and in nociception mediated by activation of GRM5. Mediates the transient outward current I(to) in rodent heart left ventricle apex cells, but not in human heart, where this current is mediated by another family member. Forms tetrameric potassium-selective channels through which potassium ions pass in accordance with their electrochemical gradient. The channel alternates between opened and closed conformations in response to the voltage difference across the membrane. Can form functional homotetrameric channels and heterotetrameric channels that contain variable proportions of KCND2 and KCND3; channel properties depend on the type of pore-forming alpha subunits that are part of the channel. In vivo, membranes probably contain a mixture of heteromeric potassium channel complexes. Interaction with specific isoforms of the regulatory subunits KCNIP1, KCNIP2, KCNIP3 or KCNIP4 strongly increases expression at the cell surface and thereby increases channel activity; it modulates the kinetics of channel activation and inactivation, shifts the threshold for channel activation to more negative voltage values, shifts the threshold for inactivation to less negative voltages and accelerates recovery after inactivation. Likewise, interaction with DPP6 or DPP10 promotes expression at the cell membrane and regulates both channel characteristics and activity. Upon depolarization, the channel goes from a resting closed state (C state) to an activated but non-conducting state (C* state), from there, the channel may either inactivate (I state) or open (O state). The chain is A-type voltage-gated potassium channel KCND2 from Mustela putorius furo (European domestic ferret).